The following is a 240-amino-acid chain: Ribonuclease 3 (240 aa).

Positions 13–143 constitute an RNase III domain; that stretch reads DHASLLEALG…LLGAVHLQHG (131 aa). E53 serves as a coordination point for Mg(2+). The active site involves D57. Mg(2+) contacts are provided by D129 and E132. Residue E132 is part of the active site. Residues 170–238 enclose the DRBM domain; that stretch reads DWKTSLQELT…AGAAYQALTA (69 aa).

The protein belongs to the ribonuclease III family. In terms of assembly, homodimer. Mg(2+) serves as cofactor.

Its subcellular location is the cytoplasm. The enzyme catalyses Endonucleolytic cleavage to 5'-phosphomonoester.. Digests double-stranded RNA. Involved in the processing of primary rRNA transcript to yield the immediate precursors to the large and small rRNAs (23S and 16S). Processes some mRNAs, and tRNAs when they are encoded in the rRNA operon. Processes pre-crRNA and tracrRNA of type II CRISPR loci if present in the organism. The polypeptide is Ribonuclease 3 (Nocardia farcinica (strain IFM 10152)).